The primary structure comprises 183 residues: Capsid protein (183 aa).

The segment at 143–183 (LPETTVVRRRGRSPRRRTPSPRRRRSQSPRRRRSQSRESQC) is disordered. Residues 149–176 (VRRRGRSPRRRTPSPRRRRSQSPRRRRS) show a composition bias toward basic residues. 3 positions are modified to phosphoserine; by host: serine 155, serine 162, and serine 170. A 1; half-length repeat occupies 155–161 (SPRRRTP). Residues 155 to 177 (SPRRRTPSPRRRRSQSPRRRRSQ) are 3 X 8 AA repeats of S-P-R-R-R-[PR]-S-Q. Positions 158 to 175 (RRTPSPRRRRSQSPRRRR) match the Bipartite nuclear localization signal motif. 2 consecutive repeat copies span residues 162–169 (SPRRRRSQ) and 170–177 (SPRRRRSQ). The RNA binding stretch occupies residues 177–183 (QSRESQC).

It belongs to the orthohepadnavirus core antigen family. In terms of assembly, homodimerizes, then multimerizes. Interacts with cytosol exposed regions of viral L glycoprotein present in the reticulum-to-Golgi compartment. Interacts with human FLNB. Phosphorylated form interacts with host importin alpha; this interaction depends on the exposure of the NLS, which itself depends upon genome maturation and/or phosphorylation of the capsid protein. Interacts with host NUP153. Post-translationally, phosphorylated by host SRPK1, SRPK2, and maybe protein kinase C or GAPDH. Phosphorylation is critical for pregenomic RNA packaging. Protein kinase C phosphorylation is stimulated by HBx protein and may play a role in transport of the viral genome to the nucleus at the late step during the viral replication cycle.

It is found in the virion. The protein resides in the host cytoplasm. Functionally, self assembles to form an icosahedral capsid. Most capsids appear to be large particles with an icosahedral symmetry of T=4 and consist of 240 copies of capsid protein, though a fraction forms smaller T=3 particles consisting of 180 capsid proteins. Entering capsids are transported along microtubules to the nucleus. Phosphorylation of the capsid is thought to induce exposure of nuclear localization signal in the C-terminal portion of the capsid protein that allows binding to the nuclear pore complex via the importin (karyopherin-) alpha and beta. Capsids are imported in intact form through the nuclear pore into the nuclear basket, where it probably binds NUP153. Only capsids that contain the mature viral genome can release the viral DNA and capsid protein into the nucleoplasm. Immature capsids get stuck in the basket. Capsids encapsulate the pre-genomic RNA and the P protein. Pre-genomic RNA is reverse-transcribed into DNA while the capsid is still in the cytoplasm. The capsid can then either be directed to the nucleus, providing more genomes for transcription, or bud through the endoplasmic reticulum to provide new virions. This Homo sapiens (Human) protein is Capsid protein.